A 102-amino-acid polypeptide reads, in one-letter code: Small ribosomal subunit protein uS10 (102 aa).

Belongs to the universal ribosomal protein uS10 family. Part of the 30S ribosomal subunit.

Involved in the binding of tRNA to the ribosomes. The polypeptide is Small ribosomal subunit protein uS10 (Roseiflexus castenholzii (strain DSM 13941 / HLO8)).